The chain runs to 864 residues: MLGRKLGKKTAQAKGRGAAAAKELGLFVDFSPEDMMLGIPDDPDDGDLEAELAALTGVKAVSKPKPKGKAPLPMEEIEKMAQDCMTDMTGEDDDDDLEEDEELLAELQDVVGEEEEVEQSQPSDTEESEPSASETQEHTEPEQQVNSSVAEIQHNLQVPAGGMLQVLEERIGNYKEAISNAKLSNESAKARRYERGLKTLESMLSAARQGRTVIEADIPPPVACGKPAVSPTTDVPTTDTSKQGLGDLNDVPMETTEAVTNLEKPEDPVSKATTNDGGAVEKTHVASENDTDSKTVLLLRQRDYKLAALKAKQTGDIEKAKEYMKISKKFSVVLEALESGQPVDLSNMPAAPEDHEAMVTESKIIAHPTPAPPVSNILNTQGSSVGSLLQALQQRMEKYKSAAQQAKSSGDDRKARMHERIAKQYQDTIRAQKAGRQVNLAELPVPPGFPPLPGMEQTEEEGSVEKALEAAQKLAKTAGEDVDDDEDECQAKPPGHPKPTQLVKPLVMPAISDNEERLLPIKAPVKVASEETFPPAVQEQLEFLEHRKKQYRKAALQAKQKNDLEQAKQHMRVAHTLQVSIDQVKSGKLVDISKVPSLPDDEESDFVVVEHEDIKSPQNSEDVYNMLMKLLHEQHEKCIRYSKQFTQMGNVAETTRFENMAEDCKKNCEILQLSQAQGLDPPPYHFEDKTLKIVRVFSELSSTEMLLIIVRGINLPAPSGVAPNDLDAYVKFEFPYPSSEQPQKNKTLVIKNTNSPEYEQSFKLNINRNHRGFKRVIQTKGIKFEIFHKGFFLVRSDKQVGSASVKLDKLETQCEIREIVEVFDGRKPTGGKLEIKVRLRDPLNGQDLQVVTEKWLVMGHVPRK.

Residues Gln-82 to His-154 are disordered. Acidic residues-rich tracts occupy residues Thr-89–Leu-104 and Val-111–Glu-129. Residues Glu-91–Glu-118 are a coiled coil. Over residues Glu-142 to His-154 the composition is skewed to polar residues. Residues Gly-162–Gln-209 are a coiled coil. Positions Ile-218–Asn-249 are disordered. The span at Val-229–Ser-241 shows a compositional bias: low complexity. Positions Val-385–Asp-412 form a coiled coil. 2 disordered regions span residues Ala-441–Ser-463 and Ala-478–Leu-502. Positions Pro-444–Pro-453 are enriched in pro residues. Coiled-coil stretches lie at residues Val-464–Glu-488 and Pro-535–Leu-564. The 136-residue stretch at His-685–Val-820 folds into the C2 domain.

Belongs to the CC2D1 family.

In Xenopus laevis (African clawed frog), this protein is Coiled-coil and C2 domain-containing protein 1B (cc2d1b).